Here is a 180-residue protein sequence, read N- to C-terminus: Calcium-binding protein E (180 aa).

EF-hand domains are found at residues K3–I38, D40–K76, A85–F120, and R139–F174. Residues D16, D18, D20, N22, and E27 each contribute to the Ca(2+) site. Ca(2+) contacts are provided by D98, D100, D102, E109, D152, D154, N156, K158, and E163.

The sequence is that of Calcium-binding protein E (cbpE) from Dictyostelium discoideum (Social amoeba).